We begin with the raw amino-acid sequence, 257 residues long: Zinc finger protein 8 (257 aa).

3 disordered regions span residues 48–92 (GDNS…NNNN), 108–128 (QALGGHQNAHKRERQHAKRGS), and 214–238 (GVYSSSPASAFRSHEQETNKEPNNW). Positions 50–65 (NSDNLSAEPSDHQTTT) are enriched in polar residues. Residues 66–92 (KNDESSENIKDKDKEKDKDKDKDNNNN) show a composition bias toward basic and acidic residues. The C2H2-type zinc finger occupies 95–117 (FECHYCFRNFPTSQALGGHQNAH). The segment covering 115-126 (NAHKRERQHAKR) has biased composition (basic residues).

Expressed in developing cauline leaves.

It is found in the nucleus. In terms of biological role, probable transcription factor required for the initiation of inflorescence trichomes in response to gibberellin and cytokinin. Is not involved in the regulation of trichome branching. Is functionally equivalent to GIS2. Acts as a negative regulator of abscisic acid (ABA) signaling during germination and early seedling development. In Arabidopsis thaliana (Mouse-ear cress), this protein is Zinc finger protein 8.